We begin with the raw amino-acid sequence, 1462 residues long: DNA topoisomerase 2 (1462 aa).

ATP contacts are provided by residues N79, N108, 136–138 (SSN), and 149–156 (GRNGYGAK). Residues 332 to 334 (NKK) form an interaction with DNA region. 365–367 (QTK) serves as a coordination point for ATP. Residues 442–556 (CTLILTEGDS…SLLKVPSFLV (115 aa)) enclose the Toprim domain. Mg(2+) contacts are provided by E448, D525, and D527. The 461-residue stretch at 671 to 1131 (KDFVNKELIL…PTTSLWLKDL (461 aa)) folds into the Topo IIA-type catalytic domain. Residue Y761 is the O-(5'-phospho-DNA)-tyrosine intermediate of the active site. The tract at residues 947–956 (KLTSTISTSN) is interaction with DNA. Disordered stretches follow at residues 1040-1077 (PMPRKGKSTKPQVAGANDDDSEEQEDAEPETASQSVSV) and 1147-1462 (EDDR…EDDD). The span at 1056-1068 (NDDDSEEQEDAEP) shows a compositional bias: acidic residues. Residues 1167–1181 (PAKKPPQPRKNTKKA) are compositionally biased toward basic residues. A compositionally biased stretch (low complexity) spans 1198–1207 (AVEAAKPAEV). The segment covering 1240–1250 (IESSGEKSQAM) has biased composition (polar residues). The span at 1260-1275 (AGKKQNNKRGGAKKKS) shows a compositional bias: basic residues. Over residues 1282–1300 (SDSDNEVNDVDDDDDDFEE) the composition is skewed to acidic residues. 2 stretches are compositionally biased toward low complexity: residues 1314-1334 (KPAAQNAKKAPAKAPAKAPAA) and 1419-1430 (APQPARARPQRA). Positions 1442–1462 (SESEEDSDEDAELSDFEEDDD) are enriched in acidic residues.

This sequence belongs to the type II topoisomerase family. As to quaternary structure, homodimer. Requires Mg(2+) as cofactor. It depends on Mn(2+) as a cofactor. The cofactor is Ca(2+). In terms of tissue distribution, abundant in proliferative tissues.

The catalysed reaction is ATP-dependent breakage, passage and rejoining of double-stranded DNA.. Control of topological states of DNA by transient breakage and subsequent rejoining of DNA strands. Topoisomerase II makes double-strand breaks. This is DNA topoisomerase 2 (TOP2) from Pisum sativum (Garden pea).